The chain runs to 170 residues: Peptide deformylase (170 aa).

2 residues coordinate Fe cation: C91 and H133. E134 is an active-site residue. H137 contacts Fe cation.

The protein belongs to the polypeptide deformylase family. The cofactor is Fe(2+).

It carries out the reaction N-terminal N-formyl-L-methionyl-[peptide] + H2O = N-terminal L-methionyl-[peptide] + formate. In terms of biological role, removes the formyl group from the N-terminal Met of newly synthesized proteins. Requires at least a dipeptide for an efficient rate of reaction. N-terminal L-methionine is a prerequisite for activity but the enzyme has broad specificity at other positions. This is Peptide deformylase from Glaesserella parasuis serovar 5 (strain SH0165) (Haemophilus parasuis).